The primary structure comprises 395 residues: Tyrosine--tRNA ligase 2 (395 aa).

A 'HIGH' region motif is present at residues 42-51 (PTAPDIHLGH). Positions 226 to 230 (KMSKS) match the 'KMSKS' region motif. Lys-229 contacts ATP. In terms of domain architecture, S4 RNA-binding spans 334–394 (IAISNLLKEA…GKRKFARVTI (61 aa)).

Belongs to the class-I aminoacyl-tRNA synthetase family. TyrS type 2 subfamily. Homodimer.

It is found in the cytoplasm. The catalysed reaction is tRNA(Tyr) + L-tyrosine + ATP = L-tyrosyl-tRNA(Tyr) + AMP + diphosphate + H(+). Its function is as follows. Catalyzes the attachment of tyrosine to tRNA(Tyr) in a two-step reaction: tyrosine is first activated by ATP to form Tyr-AMP and then transferred to the acceptor end of tRNA(Tyr). This is Tyrosine--tRNA ligase 2 from Vibrio cholerae serotype O1 (strain ATCC 39315 / El Tor Inaba N16961).